We begin with the raw amino-acid sequence, 194 residues long: FMN-dependent NADH:quinone oxidoreductase (194 aa).

Residues S9, 15 to 17 (SIS), and 85 to 88 (MYNF) contribute to the FMN site.

Belongs to the azoreductase type 1 family. As to quaternary structure, homodimer. Requires FMN as cofactor.

It catalyses the reaction 2 a quinone + NADH + H(+) = 2 a 1,4-benzosemiquinone + NAD(+). The catalysed reaction is N,N-dimethyl-1,4-phenylenediamine + anthranilate + 2 NAD(+) = 2-(4-dimethylaminophenyl)diazenylbenzoate + 2 NADH + 2 H(+). Its function is as follows. Quinone reductase that provides resistance to thiol-specific stress caused by electrophilic quinones. Functionally, also exhibits azoreductase activity. Catalyzes the reductive cleavage of the azo bond in aromatic azo compounds to the corresponding amines. The protein is FMN-dependent NADH:quinone oxidoreductase of Xanthomonas oryzae pv. oryzae (strain MAFF 311018).